Reading from the N-terminus, the 490-residue chain is Betaine aldehyde dehydrogenase (490 aa).

Residues T26, I27, and D93 each contribute to the K(+) site. Residue 150–152 (GAW) coordinates NAD(+). The active-site Charge relay system is the K162. 176–179 (KPSE) provides a ligand contact to NAD(+). Residue V180 participates in K(+) binding. NAD(+) is bound at residue 230-233 (GVAS). L246 is a K(+) binding site. Residue E252 is the Proton acceptor of the active site. Residues G254, C286, and E387 each coordinate NAD(+). Catalysis depends on C286, which acts as the Nucleophile. C286 carries the cysteine sulfenic acid (-SOH) modification. Residues K457 and G460 each coordinate K(+). E464 serves as the catalytic Charge relay system.

The protein belongs to the aldehyde dehydrogenase family. In terms of assembly, dimer of dimers. K(+) is required as a cofactor.

The catalysed reaction is betaine aldehyde + NAD(+) + H2O = glycine betaine + NADH + 2 H(+). It functions in the pathway amine and polyamine biosynthesis; betaine biosynthesis via choline pathway; betaine from betaine aldehyde: step 1/1. Its function is as follows. Involved in the biosynthesis of the osmoprotectant glycine betaine. Catalyzes the irreversible oxidation of betaine aldehyde to the corresponding acid. The protein is Betaine aldehyde dehydrogenase of Escherichia coli (strain ATCC 8739 / DSM 1576 / NBRC 3972 / NCIMB 8545 / WDCM 00012 / Crooks).